The following is a 171-amino-acid chain: uncharacterized protein (171 aa).

Transmembrane regions (helical) follow at residues 13-35 and 50-72; these read VGAS…IATA and ATVL…AYVV.

It is found in the cell membrane. This is an uncharacterized protein from Treponema pallidum (strain Nichols).